Reading from the N-terminus, the 143-residue chain is Transcriptional regulator MraZ (143 aa).

SpoVT-AbrB domains lie at 5–47 and 76–119; these read EYEH…PMPV and ASDL…SAER.

Belongs to the MraZ family. In terms of assembly, forms oligomers.

Its subcellular location is the cytoplasm. It is found in the nucleoid. This is Transcriptional regulator MraZ from Herpetosiphon aurantiacus (strain ATCC 23779 / DSM 785 / 114-95).